We begin with the raw amino-acid sequence, 136 residues long: 6,7-dimethyl-8-ribityllumazine synthase (136 aa).

5-amino-6-(D-ribitylamino)uracil is bound by residues F11, 43–45 (SFD), and 67–69 (AVI). 72–73 (ET) is a (2S)-2-hydroxy-3-oxobutyl phosphate binding site. The Proton donor role is filled by H75. L100 contacts 5-amino-6-(D-ribitylamino)uracil. R115 provides a ligand contact to (2S)-2-hydroxy-3-oxobutyl phosphate.

Belongs to the DMRL synthase family.

The catalysed reaction is (2S)-2-hydroxy-3-oxobutyl phosphate + 5-amino-6-(D-ribitylamino)uracil = 6,7-dimethyl-8-(1-D-ribityl)lumazine + phosphate + 2 H2O + H(+). It functions in the pathway cofactor biosynthesis; riboflavin biosynthesis; riboflavin from 2-hydroxy-3-oxobutyl phosphate and 5-amino-6-(D-ribitylamino)uracil: step 1/2. Its function is as follows. Catalyzes the formation of 6,7-dimethyl-8-ribityllumazine by condensation of 5-amino-6-(D-ribitylamino)uracil with 3,4-dihydroxy-2-butanone 4-phosphate. This is the penultimate step in the biosynthesis of riboflavin. This Picrophilus torridus (strain ATCC 700027 / DSM 9790 / JCM 10055 / NBRC 100828 / KAW 2/3) protein is 6,7-dimethyl-8-ribityllumazine synthase.